A 79-amino-acid chain; its full sequence is Eumenine mastoparan-OD (79 aa).

Residues 1-24 (MKQTIVIVLLAAVAMMACLQMVAA) form the signal peptide. AXPX repeat units follow at residues 24 to 27 (AEPL), 30 to 33 (AAPA), 44 to 47 (ASPI), 52 to 55 (ANPE), and 58 to 61 (ASPE). Positions 25-62 (EPLPEAAPAPSPLAEAEALASPIAEALANPEALASPEA) are excised as a propeptide. The residue at position 76 (Leu76) is a Leucine amide.

Expressed by the venom gland.

It is found in the secreted. Its subcellular location is the target cell membrane. Its function is as follows. Antimicrobial peptide with strong activity against the fungi C.albicans (MIC=6 uM) and B.cinerea (MIC=10 uM), and weaker activity against the Gram-negative bacterium E.coli (MIC=97 uM) and Gram-positive bacterium S.aureus (MIC=97 uM). Shows cytolytic activity against insect cell lines. Has potent hemolytic activity against ovine erythrocytes (80% at 50 uM), but has no hemolytic activity against human erythrocytes. In vivo, peptide injection in the vicinity of the head and thorax of lepidopteran larvae induces feeding disorder that lasts one or two days before recovering. The chain is Eumenine mastoparan-OD from Orancistrocerus drewseni (Solitary wasp).